A 269-amino-acid polypeptide reads, in one-letter code: 4-hydroxy-tetrahydrodipicolinate reductase (269 aa).

Residues 13-18 (GASGRM) and Asp-39 each bind NAD(+). Residue Arg-40 coordinates NADP(+). Residues 101–103 (GTT) and 125–128 (APNM) each bind NAD(+). The active-site Proton donor/acceptor is the His-158. Residue His-159 coordinates (S)-2,3,4,5-tetrahydrodipicolinate. Residue Lys-162 is the Proton donor of the active site. 168–169 (GT) lines the (S)-2,3,4,5-tetrahydrodipicolinate pocket.

Belongs to the DapB family.

Its subcellular location is the cytoplasm. It carries out the reaction (S)-2,3,4,5-tetrahydrodipicolinate + NAD(+) + H2O = (2S,4S)-4-hydroxy-2,3,4,5-tetrahydrodipicolinate + NADH + H(+). The catalysed reaction is (S)-2,3,4,5-tetrahydrodipicolinate + NADP(+) + H2O = (2S,4S)-4-hydroxy-2,3,4,5-tetrahydrodipicolinate + NADPH + H(+). It participates in amino-acid biosynthesis; L-lysine biosynthesis via DAP pathway; (S)-tetrahydrodipicolinate from L-aspartate: step 4/4. Functionally, catalyzes the conversion of 4-hydroxy-tetrahydrodipicolinate (HTPA) to tetrahydrodipicolinate. This Bordetella bronchiseptica (strain ATCC BAA-588 / NCTC 13252 / RB50) (Alcaligenes bronchisepticus) protein is 4-hydroxy-tetrahydrodipicolinate reductase.